The primary structure comprises 910 residues: Harmonin (910 aa).

The tract at residues 1–86 is N-terminal domain; the sequence is MDRKVAREFR…LTPRRSRKLK (86 aa). PDZ domains follow at residues 87 to 171 and 211 to 295; these read EVRL…GLIP and KVFI…AGRE. The mediates interaction with MYO7B stretch occupies residues 194-833; that stretch reads GVRGGLGSPG…KAWNQGGDWI (640 aa). S219 is modified (phosphoserine). Coiled-coil stretches lie at residues 299–377 and 417–482; these read TDRE…WEED and TIRK…DLEE. Residues 563–688 form a disordered region; it reads VMPHPPSVNS…PPRGPGVSTI (126 aa). Pro residues predominate over residues 564–582; sequence MPHPPSVNSPSKVPAPPVL. The span at 583–596 shows a compositional bias: low complexity; the sequence is PSSGHVSSSSSPWV. Positions 599–611 are enriched in pro residues; it reads TPPPIPIPPPPSI. A compositionally biased stretch (polar residues) spans 650–664; sequence NTHSGKPSSSPTTER. Positions 752-839 constitute a PDZ 3 domain; the sequence is DVRLLRIKKE…GDWIDLVVAV (88 aa). Positions 890-910 are disordered; sequence KSRERNQTDPSWRPASSAPSP. Low complexity predominate over residues 899-910; the sequence is PSWRPASSAPSP.

In terms of assembly, part of the IMAC/intermicrovillar adhesion complex/intermicrovillar tip-link complex composed of ANKS4B, MYO7B, USH1C, CDHR2 and CDHR5. Part of a complex composed of USH1C, USH1G and MYO7A. Interacts with F-actin. Interacts with USH2A. Interacts with SLC4A7. Interacts (via PDZ1 domain) with the C-terminus of USHBP1. Interacts (via N-terminus and PDZ 2 domain) with CDH23. Interacts with USH1G. Interacts with MYO7B. Interacts with CDHR2 and CDHR5; may mediate their interaction with MYO7B at the microvilli tip. Interacts (via PDZ 1 domain) with ANKS4B. Interacts (via PDZ 1 domain) with DOCK4. Detected in stereocilia of cochlear hair cells (at protein level). Isoform 1 is expressed in the eye, cochlea, vestibule, heart, kidney, small intestine and testis; it is barely visible in skeletal muscle, liver, and lung and is absent from the brain. Isoforms 2 and 3 are expressed in the cochlea and vestibule.

The protein localises to the cytoplasm. It is found in the cytosol. Its subcellular location is the cytoskeleton. It localises to the cell projection. The protein resides in the microvillus. Functionally, anchoring/scaffolding protein that is a part of the functional network formed by USH1C, USH1G, CDH23 and MYO7A that mediates mechanotransduction in cochlear hair cells. Required for normal development and maintenance of cochlear hair cell bundles. As part of the intermicrovillar adhesion complex/IMAC plays a role in brush border differentiation, controlling microvilli organization and length. Probably plays a central regulatory role in the assembly of the complex, recruiting CDHR2, CDHR5 and MYO7B to the microvilli tips. The sequence is that of Harmonin (Ush1c) from Mus musculus (Mouse).